A 203-amino-acid chain; its full sequence is Holliday junction branch migration complex subunit RuvA (203 aa).

The tract at residues 1-64 (MIGRLRGIIL…EDAQLLYGFN (64 aa)) is domain I. The tract at residues 65–142 (NKQERTLFKE…KGLHGDLFTP (78 aa)) is domain II. Positions 143–154 (AADLVLTSPAGP) are flexible linker. Residues 155–203 (TADDAEQEAVAALVALGYKPQEASRMVSKIARPDANSETLIREALRAAL) are domain III.

Belongs to the RuvA family. In terms of assembly, homotetramer. Forms an RuvA(8)-RuvB(12)-Holliday junction (HJ) complex. HJ DNA is sandwiched between 2 RuvA tetramers; dsDNA enters through RuvA and exits via RuvB. An RuvB hexamer assembles on each DNA strand where it exits the tetramer. Each RuvB hexamer is contacted by two RuvA subunits (via domain III) on 2 adjacent RuvB subunits; this complex drives branch migration. In the full resolvosome a probable DNA-RuvA(4)-RuvB(12)-RuvC(2) complex forms which resolves the HJ.

The protein resides in the cytoplasm. The RuvA-RuvB-RuvC complex processes Holliday junction (HJ) DNA during genetic recombination and DNA repair, while the RuvA-RuvB complex plays an important role in the rescue of blocked DNA replication forks via replication fork reversal (RFR). RuvA specifically binds to HJ cruciform DNA, conferring on it an open structure. The RuvB hexamer acts as an ATP-dependent pump, pulling dsDNA into and through the RuvAB complex. HJ branch migration allows RuvC to scan DNA until it finds its consensus sequence, where it cleaves and resolves the cruciform DNA. In Klebsiella pneumoniae (strain 342), this protein is Holliday junction branch migration complex subunit RuvA.